A 265-amino-acid polypeptide reads, in one-letter code: Hydroxyethylthiazole kinase 2 (265 aa).

Substrate is bound at residue methionine 39. ATP is bound by residues lysine 115 and threonine 168. Glycine 195 is a binding site for substrate.

Belongs to the Thz kinase family. Mg(2+) is required as a cofactor.

The enzyme catalyses 5-(2-hydroxyethyl)-4-methylthiazole + ATP = 4-methyl-5-(2-phosphooxyethyl)-thiazole + ADP + H(+). The protein operates within cofactor biosynthesis; thiamine diphosphate biosynthesis; 4-methyl-5-(2-phosphoethyl)-thiazole from 5-(2-hydroxyethyl)-4-methylthiazole: step 1/1. Catalyzes the phosphorylation of the hydroxyl group of 4-methyl-5-beta-hydroxyethylthiazole (THZ). The chain is Hydroxyethylthiazole kinase 2 from Clostridium botulinum (strain ATCC 19397 / Type A).